The chain runs to 181 residues: Early upstream open reading frame (181 aa).

It belongs to the EUO family.

The chain is Early upstream open reading frame from Chlamydia caviae (strain ATCC VR-813 / DSM 19441 / 03DC25 / GPIC) (Chlamydophila caviae).